We begin with the raw amino-acid sequence, 229 residues long: Cytochrome c oxidase subunit 2 (229 aa).

The Mitochondrial intermembrane segment spans residues 1-26; sequence MATWSNLGLQDSASPLMEQLNFFHDH. Residues 27 to 48 form a helical membrane-spanning segment; that stretch reads TLLILIMITILVGYLMLMLFFN. Residues 49–62 lie on the Mitochondrial matrix side of the membrane; the sequence is KFTNRFLLHGQTIE. The helical transmembrane segment at 63–82 threads the bilayer; it reads IIWTILPAIVLMFIALPSLR. Topologically, residues 83-229 are mitochondrial intermembrane; the sequence is ILYLLDEINS…IKWITAMNSN (147 aa). Cu cation is bound by residues His-161, Cys-196, Glu-198, Cys-200, His-204, and Met-207. A Mg(2+)-binding site is contributed by Glu-198.

Belongs to the cytochrome c oxidase subunit 2 family. As to quaternary structure, component of the cytochrome c oxidase (complex IV, CIV), a multisubunit enzyme composed of a catalytic core of 3 subunits and several supernumerary subunits. The complex exists as a monomer or a dimer and forms supercomplexes (SCs) in the inner mitochondrial membrane with ubiquinol-cytochrome c oxidoreductase (cytochrome b-c1 complex, complex III, CIII). Cu cation is required as a cofactor.

It is found in the mitochondrion inner membrane. The catalysed reaction is 4 Fe(II)-[cytochrome c] + O2 + 8 H(+)(in) = 4 Fe(III)-[cytochrome c] + 2 H2O + 4 H(+)(out). Functionally, component of the cytochrome c oxidase, the last enzyme in the mitochondrial electron transport chain which drives oxidative phosphorylation. The respiratory chain contains 3 multisubunit complexes succinate dehydrogenase (complex II, CII), ubiquinol-cytochrome c oxidoreductase (cytochrome b-c1 complex, complex III, CIII) and cytochrome c oxidase (complex IV, CIV), that cooperate to transfer electrons derived from NADH and succinate to molecular oxygen, creating an electrochemical gradient over the inner membrane that drives transmembrane transport and the ATP synthase. Cytochrome c oxidase is the component of the respiratory chain that catalyzes the reduction of oxygen to water. Electrons originating from reduced cytochrome c in the intermembrane space (IMS) are transferred via the dinuclear copper A center (CU(A)) of subunit 2 and heme A of subunit 1 to the active site in subunit 1, a binuclear center (BNC) formed by heme A3 and copper B (CU(B)). The BNC reduces molecular oxygen to 2 water molecules using 4 electrons from cytochrome c in the IMS and 4 protons from the mitochondrial matrix. In Simulium vittatum (Striped black fly), this protein is Cytochrome c oxidase subunit 2 (COII).